A 150-amino-acid chain; its full sequence is Large ribosomal subunit protein bL9 (150 aa).

The protein belongs to the bacterial ribosomal protein bL9 family.

Functionally, binds to the 23S rRNA. This Pseudarthrobacter chlorophenolicus (strain ATCC 700700 / DSM 12829 / CIP 107037 / JCM 12360 / KCTC 9906 / NCIMB 13794 / A6) (Arthrobacter chlorophenolicus) protein is Large ribosomal subunit protein bL9.